Consider the following 253-residue polypeptide: 2-C-methyl-D-erythritol 4-phosphate cytidylyltransferase (253 aa).

The tract at residues 1–28 (MSVSSRPGRRRFALIPSAGTGTRAGGDL) is disordered.

The protein belongs to the IspD/TarI cytidylyltransferase family. IspD subfamily.

The enzyme catalyses 2-C-methyl-D-erythritol 4-phosphate + CTP + H(+) = 4-CDP-2-C-methyl-D-erythritol + diphosphate. The protein operates within isoprenoid biosynthesis; isopentenyl diphosphate biosynthesis via DXP pathway; isopentenyl diphosphate from 1-deoxy-D-xylulose 5-phosphate: step 2/6. In terms of biological role, catalyzes the formation of 4-diphosphocytidyl-2-C-methyl-D-erythritol from CTP and 2-C-methyl-D-erythritol 4-phosphate (MEP). The sequence is that of 2-C-methyl-D-erythritol 4-phosphate cytidylyltransferase from Ralstonia nicotianae (strain ATCC BAA-1114 / GMI1000) (Ralstonia solanacearum).